Consider the following 856-residue polypeptide: Serine/threonine-protein kinase unc-51 (856 aa).

The region spanning Y9 to L275 is the Protein kinase domain. ATP-binding positions include L15–V23 and K39. D134 acts as the Proton acceptor in catalysis. The interval P304–R327 is disordered. Residues F358–L361 carry the LIR motif. Disordered regions lie at residues P362–V391, L405–T471, and P520–P582. The segment covering Q365–T385 has biased composition (polar residues). Residues T411 to Q436 show a composition bias toward low complexity. Composition is skewed to polar residues over residues I527–I536 and K566–A578. The tract at residues Y750–T856 is required for interaction with unc-14 and vab-8.

Belongs to the protein kinase superfamily. Ser/Thr protein kinase family. APG1/unc-51/ULK1 subfamily. In terms of assembly, interacts with unc-14 and vab-8. Interacts (via C-terminus) with atg-13. Interacts (via the LIR motif) with lgg-1; the interaction is direct. It depends on Mg(2+) as a cofactor.

It catalyses the reaction L-seryl-[protein] + ATP = O-phospho-L-seryl-[protein] + ADP + H(+). The catalysed reaction is L-threonyl-[protein] + ATP = O-phospho-L-threonyl-[protein] + ADP + H(+). Functionally, protein kinase important for axonal elongation and axonal guidance. Functions in the CAN axons to direct both anterior and posterior migrations. Phosphorylates both unc-14 and vab-8. Component of the unc-51/atg-13 complex that is probably recruited by lgg-1 to preautophagosomes and is required for autophagosome formation. Interaction with autophagy related proteins such as atg-13 links it to the autophagy machinery to in turn promote P-granule degradation in somatic cells. Plays a role in mitophagy during limited food availability. Regulates cell size. Plays a role in male tail ray pattern formation. May be required for normal dauer morphogenesis. In Caenorhabditis elegans, this protein is Serine/threonine-protein kinase unc-51.